The primary structure comprises 114 residues: UPF0339 protein plu2779 (114 aa).

A run of 2 repeats spans residues threonine 11–isoleucine 59 and asparagine 62–leucine 110.

The protein belongs to the UPF0339 family. Duplicated subfamily.

This Photorhabdus laumondii subsp. laumondii (strain DSM 15139 / CIP 105565 / TT01) (Photorhabdus luminescens subsp. laumondii) protein is UPF0339 protein plu2779.